The following is a 336-amino-acid chain: Dihydroorotate dehydrogenase (quinone) (336 aa).

FMN contacts are provided by residues 62–66 (AGLDK) and threonine 86. Residue lysine 66 coordinates substrate. 111–115 (NRMGF) is a binding site for substrate. FMN-binding residues include asparagine 139 and asparagine 172. A substrate-binding site is contributed by asparagine 172. Serine 175 (nucleophile) is an active-site residue. Asparagine 177 is a substrate binding site. FMN is bound by residues lysine 217 and threonine 245. Residue 246–247 (NT) coordinates substrate. Residues glycine 268, glycine 297, and 318–319 (YS) each bind FMN.

It belongs to the dihydroorotate dehydrogenase family. Type 2 subfamily. As to quaternary structure, monomer. FMN is required as a cofactor.

It is found in the cell membrane. It catalyses the reaction (S)-dihydroorotate + a quinone = orotate + a quinol. The protein operates within pyrimidine metabolism; UMP biosynthesis via de novo pathway; orotate from (S)-dihydroorotate (quinone route): step 1/1. Its function is as follows. Catalyzes the conversion of dihydroorotate to orotate with quinone as electron acceptor. The chain is Dihydroorotate dehydrogenase (quinone) from Enterobacter sp. (strain 638).